The following is a 120-amino-acid chain: Small ribosomal subunit protein uS13 (120 aa).

A disordered region spans residues R93–K120. Positions A107 to K120 are enriched in basic residues.

The protein belongs to the universal ribosomal protein uS13 family. Part of the 30S ribosomal subunit. Forms a loose heterodimer with protein S19. Forms two bridges to the 50S subunit in the 70S ribosome.

In terms of biological role, located at the top of the head of the 30S subunit, it contacts several helices of the 16S rRNA. In the 70S ribosome it contacts the 23S rRNA (bridge B1a) and protein L5 of the 50S subunit (bridge B1b), connecting the 2 subunits; these bridges are implicated in subunit movement. Contacts the tRNAs in the A and P-sites. The sequence is that of Small ribosomal subunit protein uS13 from Helicobacter pylori (strain P12).